Consider the following 290-residue polypeptide: uncharacterized protein (290 aa).

A run of 5 helical transmembrane segments spans residues 10–27 (FFVA…LLLI), 32–54 (VNYI…YFFS), 69–91 (ILVP…GVLI), 100–117 (VLAG…FFYF), and 121–143 (YLLM…NFEY). Residues 147 to 183 (VGKERKRILKLKKNYHKLLKEFSNFEREKRMFSNLRK) are a coiled coil.

It is found in the cell membrane. This is an uncharacterized protein from Aquifex aeolicus (strain VF5).